Here is a 423-residue protein sequence, read N- to C-terminus: UPF0229 protein Psyr_4632 (423 aa).

Residues 65-110 (HHGRGGKQTVVHPGNKEFTTGEHIARPQGGGGGKGPGKAGNSGEGM) are disordered. A compositionally biased stretch (gly residues) spans 92 to 107 (QGGGGGKGPGKAGNSG).

Belongs to the UPF0229 family.

This Pseudomonas syringae pv. syringae (strain B728a) protein is UPF0229 protein Psyr_4632.